Reading from the N-terminus, the 405-residue chain is Imidazolonepropionase (405 aa).

Residues H72 and H74 each coordinate Fe(3+). The Zn(2+) site is built by H72 and H74. 4-imidazolone-5-propanoate-binding residues include R81, Y144, and H177. Y144 is an N-formimidoyl-L-glutamate binding site. H242 is a Fe(3+) binding site. H242 contributes to the Zn(2+) binding site. Q245 lines the 4-imidazolone-5-propanoate pocket. Residue D317 participates in Fe(3+) binding. Residue D317 coordinates Zn(2+). 2 residues coordinate N-formimidoyl-L-glutamate: N319 and G321. T322 provides a ligand contact to 4-imidazolone-5-propanoate.

Belongs to the metallo-dependent hydrolases superfamily. HutI family. Zn(2+) serves as cofactor. It depends on Fe(3+) as a cofactor.

It is found in the cytoplasm. It carries out the reaction 4-imidazolone-5-propanoate + H2O = N-formimidoyl-L-glutamate. It participates in amino-acid degradation; L-histidine degradation into L-glutamate; N-formimidoyl-L-glutamate from L-histidine: step 3/3. In terms of biological role, catalyzes the hydrolytic cleavage of the carbon-nitrogen bond in imidazolone-5-propanoate to yield N-formimidoyl-L-glutamate. It is the third step in the universal histidine degradation pathway. This is Imidazolonepropionase from Klebsiella pneumoniae subsp. pneumoniae (strain ATCC 700721 / MGH 78578).